The sequence spans 247 residues: T-cell surface glycoprotein CD8 alpha chain (247 aa).

The first 27 residues, 1–27 (MASPLTRFLSLNLLLLGESIILGSGEA), serve as a signal peptide directing secretion. Positions 28 to 139 (KPQAPELRIF…SVISNSVMYF (112 aa)) constitute an Ig-like V-type domain. Over 28–196 (KPQAPELRIF…TGLDFACDIY (169 aa)) the chain is Extracellular. The cysteines at positions 53 and 129 are disulfide-linked. N-linked (GlcNAc...) asparagine glycans are attached at residues asparagine 69, asparagine 97, and asparagine 150. Residues 156–182 (PVLRTPSPVHPTGTSQPQRPEDCRPRG) form a disordered region. The helical transmembrane segment at 197-217 (IWAPLAGICVALLLSLIITLI) threads the bilayer. At 218–247 (CYHRSRKRVCKCPRPLVRQEGKPRPSEKIV) the chain is on the cytoplasmic side.

In terms of assembly, forms disulfide-linked heterodimers with CD8B at the cell surface. Also forms homodimers in several cell types including NK-cells or peripheral blood T-lymphocytes. Interacts with the MHC class I HLA-A/B2M dimer. Interacts with LCK in a zinc-dependent manner. Post-translationally, palmitoylated, but association with CD8B seems to be more important for the enrichment of CdD8A in lipid rafts. In terms of processing, phosphorylated in cytotoxic T-lymphocytes (CTLs) following activation.

The protein localises to the cell membrane. Its function is as follows. Integral membrane glycoprotein that plays an essential role in the immune response and serves multiple functions in responses against both external and internal offenses. In T-cells, functions primarily as a coreceptor for MHC class I molecule:peptide complex. The antigens presented by class I peptides are derived from cytosolic proteins while class II derived from extracellular proteins. Interacts simultaneously with the T-cell receptor (TCR) and the MHC class I proteins presented by antigen presenting cells (APCs). In turn, recruits the Src kinase LCK to the vicinity of the TCR-CD3 complex. LCK then initiates different intracellular signaling pathways by phosphorylating various substrates ultimately leading to lymphokine production, motility, adhesion and activation of cytotoxic T-lymphocytes (CTLs). This mechanism enables CTLs to recognize and eliminate infected cells and tumor cells. In NK-cells, the presence of CD8A homodimers at the cell surface provides a survival mechanism allowing conjugation and lysis of multiple target cells. CD8A homodimer molecules also promote the survival and differentiation of activated lymphocytes into memory CD8 T-cells. This is T-cell surface glycoprotein CD8 alpha chain (Cd8a) from Mus musculus (Mouse).